Here is a 140-residue protein sequence, read N- to C-terminus: Neuropeptide CCHamide-2 (140 aa).

A signal peptide spans 1–22; sequence MAQMYLAVTIIALLAISHGVSA. Cysteine 26 and cysteine 33 are oxidised to a cystine. Residue histidine 37 is modified to Histidine amide. Positions 41–140 are excised as a propeptide; that stretch reads SGDTSAMDQL…PDDGYYIESL (100 aa).

In terms of tissue distribution, expressed in corpora cardiaca (CC), corpora allata (CA), antennal lobe (AL) and gnathal ganglion (GNG) (at protein level). Expression detected in few animals (at protein level).

The protein localises to the secreted. Functionally, ligand for the CCHamide-2 receptor CCHa2-R. The chain is Neuropeptide CCHamide-2 from Agrotis ipsilon (Black cutworm moth).